The following is a 590-amino-acid chain: MAPEIHMPEPLCLIGSTEGHLVTNQEALKILSAITQPVVVVAIVGLYRTGKSYLMNKLAGKEKGFSVGSTVQSHTKGIWMWCVPHPQKPDHTLVLLDTEGLGDVEKDDKKNDTQIFALAILLSSTFVYNTMNKIDQGAIDLLHNVTELTDLLRTRNSSDSNQTEGEGPADMSFFPDLVWTLRDFFLDLQANGHAITSDEYLENSLKLKQGSDERTQTFNLPRLCIQKFFPVKKCFVFDAPALGSKLSQLPTLSNEELNSDFVQDLSEFCSHIFTQSKTKTLPGGIQVNGPRLESLVLTYVDAINSGALPSIENTVVTLARRENSAAVQKAIGHYDQLMSEKVQLPTETLQELLDLHRTCEREAIEIFRKHSFKDEGEFFQKELESLLSAKQDEICKKNADASAALCSTLLGSIFKPLEQEVAQEFYHKPGGHKLFLQRMEQLKANYRQQPGKGTQAEEVLQTYLNAKETVSRTILQTDQVLTDKEIQSKAEQERAEAARLEAQRLEAIRIQEEQRKAEMERQHQEQLRQIALEKARVAQEQQWILKQRAQEEADRIKAEQEAQLRALQQQLQHMREMNHHRRHHHDCVIS.

Residues 1–306 are NLRP3-binding; the sequence is MAPEIHMPEP…LTYVDAINSG (306 aa). A GTPase domain (Globular) region spans residues 1–310; that stretch reads MAPEIHMPEP…DAINSGALPS (310 aa). Residues 35–277 form the GB1/RHD3-type G domain; that stretch reads TQPVVVVAIV…FCSHIFTQSK (243 aa). Residues 45-52, 67-69, 182-183, and L246 contribute to the GTP site; these read GLYRTGKS, VGS, and RD. Residues 529-590 form a required for tetramerization, but not for dimerization region; the sequence is QIALEKARVA…RRHHHDCVIS (62 aa). C587 carries the post-translational modification Cysteine methyl ester. Residue C587 is the site of S-geranylgeranyl cysteine attachment. The propeptide at 588 to 590 is removed in mature form; it reads VIS.

Belongs to the TRAFAC class dynamin-like GTPase superfamily. GB1/RHD3 GTPase family. GB1 subfamily. As to quaternary structure, homodimer; homodimerizes upon GTP-binding, forming a close face-to-face dimer. Heterodimer with other family members, including GBP1, GBP2, GBP3 and GBP4. May also form tetramers (dimer of dimers) in the presence of GTP. Interacts with NLRP3, possibly in its tetrameric form, and promotes PYCARD/ASC polymerization. In terms of processing, isoprenylation is required for proper subcellular location. As to expression, low expression, if any, in many tissues in the absence of stimulation.

Its subcellular location is the cytoplasmic vesicle membrane. It is found in the golgi apparatus membrane. The protein localises to the cytoplasm. It catalyses the reaction GTP + H2O = GDP + phosphate + H(+). Its function is as follows. Interferon (IFN)-inducible GTPase that plays important roles in innate immunity against a diverse range of bacterial, viral and protozoan pathogens. Hydrolyzes GTP, but in contrast to other family members, does not produce GMP. Following infection, recruited to the pathogen-containing vacuoles or vacuole-escaped bacteria and acts as a positive regulator of inflammasome assembly by promoting the release of inflammasome ligands from bacteria. Acts by promoting lysis of pathogen-containing vacuoles, releasing pathogens into the cytosol. Following pathogen release in the cytosol, promotes recruitment of proteins that mediate bacterial cytolysis, such as Gm12250/Irgb10: this liberates ligands that are detected by inflammasomes, such as lipopolysaccharide (LPS) that activates the non-canonical CASP4/CASP11 inflammasome or double-stranded DNA (dsDNA) that activates the AIM2 inflammasome. As an activator of NLRP3 inflammasome assembly: promotes selective NLRP3 inflammasome assembly in response to microbial and soluble, but not crystalline, agents. Independently of its GTPase activity, acts as an inhibitor of various viruses infectivity by inhibiting FURIN-mediated maturation of viral envelope proteins. The sequence is that of Guanylate-binding protein 5 from Mus musculus (Mouse).